Consider the following 270-residue polypeptide: Putative pyruvate, phosphate dikinase regulatory protein (270 aa).

151 to 158 (GVSRTSKT) is an ADP binding site.

This sequence belongs to the pyruvate, phosphate/water dikinase regulatory protein family. PDRP subfamily.

The catalysed reaction is N(tele)-phospho-L-histidyl/L-threonyl-[pyruvate, phosphate dikinase] + ADP = N(tele)-phospho-L-histidyl/O-phospho-L-threonyl-[pyruvate, phosphate dikinase] + AMP + H(+). It carries out the reaction N(tele)-phospho-L-histidyl/O-phospho-L-threonyl-[pyruvate, phosphate dikinase] + phosphate + H(+) = N(tele)-phospho-L-histidyl/L-threonyl-[pyruvate, phosphate dikinase] + diphosphate. Bifunctional serine/threonine kinase and phosphorylase involved in the regulation of the pyruvate, phosphate dikinase (PPDK) by catalyzing its phosphorylation/dephosphorylation. This Ligilactobacillus salivarius (strain UCC118) (Lactobacillus salivarius) protein is Putative pyruvate, phosphate dikinase regulatory protein.